We begin with the raw amino-acid sequence, 255 residues long: uncharacterized protein (255 aa).

Positions 1-23 (MKRLNKLVLGISFLFLVISITAG) are cleaved as a signal peptide. Cysteine 24 is lipidated: N-palmitoyl cysteine. Residue cysteine 24 is the site of S-diacylglycerol cysteine attachment.

The protein belongs to the staphylococcal tandem lipoprotein family.

The protein resides in the cell membrane. This is an uncharacterized protein from Staphylococcus aureus (strain N315).